The chain runs to 114 residues: Iron-sulfur cluster insertion protein ErpA (114 aa).

Iron-sulfur cluster is bound by residues Cys42, Cys106, and Cys108.

The protein belongs to the HesB/IscA family. As to quaternary structure, homodimer. Iron-sulfur cluster serves as cofactor.

Functionally, required for insertion of 4Fe-4S clusters for at least IspG. This chain is Iron-sulfur cluster insertion protein ErpA, found in Serratia proteamaculans (strain 568).